A 1128-amino-acid chain; its full sequence is MGDTAPPQAPTGGLGGAPGAGLLGGGSVTPRVHSAIVERLRARIAVCRQHHLSCEGRYERGRAESSDRERESTLQLLSLVQHGQGARKAGKHTKATASTATATAPPPAPAAPPTASQTAAPAAPAPPPDYHHHHQQHLRSSSSSGGSGGIDGEQQQQPPASTPGDQRNSALIALQGSLKRKQIVNLSPANSKRPNGFVDNSFLDIKRIRVGENLAAGPGGLPVNNGQSQMMSGTLPMSQVPLRKTAALPPPPTHSPGNGLFNMGLKEVKKEPGETLSCSKHVDGQVTQENIFSNRYGDDPGEQLMDPELQELFNELTNISVPPMSDLELENMINATIKQDDPFNIDLGQQSQRSTPRPSLPLEKTVIKSEYSPGLTQGPSGSPQLRPSSAGPAFSMASSGLSASSPIPSVPQSQAQPPPATGAARALPSWQEVSHAQQLKQIAANRQQHVRMHQQQQQHQPTSWPALPSSAGPSPGPFGQEKIPSPSFGQQPFSPQSTPMPGVTGGSNQSKVMANYLFKASPSAQGGPLDVLLQPKPQDLSRSFLNNPHPAMEPRHGSTKPLFHFNSDQANQQMPSVLPSQSKPSLLHYTQQQPQQSSITVQPQQQQQQPQQQQQPQQQQQPQPQQQQQQQPQAQQPAAQPTQPLSNQPLLRAPLPLQQKILLQKIQNQPITGLGYQVSQQHRQDQHSVVGQNAGPSPSPNPCSNPNTGSGYMNSQQSLLNQQLMGKKQTLQRQIMEQKQQLLLQQQMLADAEKIAPQDQINRHLTRPPPDYKDQRRNVGNMQPTAQYSGGSSTVSLNSNQALANPVSTHTILTPNSSLMSTSHGTRMPSLPTAVQNIGIYGNLPCSQPSTYSVTSGMNQLTQPRNPNQLIANQNNPLMPRPPTLGPSNNNNNNVATFGAGSVGNSQQLRPNLTHSMASMPAQRTSNVMITSNTATPNWASQEATAKQQEALKSAGVRFPTGTTTAYAPNQSLQQAVGSQQFSQRAVAPSNQLTPAVQMRPMNQMSQTLNGQNMGPLRSLNLRPNQLSTQLLPTMNQAGTGLSQSRTVSQPPSLAAGGFPSPNQSSRAFQGTDHGNDLAFDFLNQQTDNMGPALNSDADFIDSLLKTEPGNDDWMKDINLDEILGNNS.

Disordered stretches follow at residues 1-22 (MGDT…GAGL) and 81-167 (QHGQ…GDQR). The segment covering 12–22 (GGLGGAPGAGL) has biased composition (gly residues). Positions 113-122 (PTASQTAAPA) are enriched in low complexity. Ser-177 is subject to Phosphoserine. Disordered regions lie at residues 343–509 (FNID…GSNQ), 521–649 (SPSA…SNQP), 677–714 (QVSQ…GYMN), 758–794 (QDQI…GSST), and 1039–1073 (GTGL…QGTD). 2 stretches are compositionally biased toward polar residues: residues 347–357 (LGQQSQRSTPR) and 374–387 (GLTQ…QLRP). Residues 395 to 426 (SMASSGLSASSPIPSVPQSQAQPPPATGAARA) are compositionally biased toward low complexity. Over residues 431-446 (QEVSHAQQLKQIAANR) the composition is skewed to polar residues. 2 stretches are compositionally biased toward low complexity: residues 453-473 (HQQQ…SAGP) and 484-497 (PSPS…SPQS). Positions 566-584 (NSDQANQQMPSVLPSQSKP) are enriched in polar residues. The segment covering 590–649 (TQQQPQQSSITVQPQQQQQQPQQQQQPQQQQQPQPQQQQQQQPQAQQPAAQPTQPLSNQP) has biased composition (low complexity). Polar residues-rich tracts occupy residues 677–695 (QVSQ…QNAG), 778–794 (NVGN…GSST), and 1039–1052 (GTGL…SQPP).

Belongs to the mastermind family. As to quaternary structure, interacts through its N-terminal region with the ankyrin repeat region of the Notch proteins NOTCH1, NOTCH2, NOTCH3 and NOTCH4. Forms a DNA-binding complex with Notch proteins and RBPSUH/RBP-J kappa.

It localises to the nucleus speckle. Functionally, acts as a transcriptional coactivator for NOTCH proteins. Has been shown to amplify NOTCH-induced transcription of HES1. Potentiates activation by NOTCH3 and NOTCH4 more efficiently than MAML1 or MAML3. The protein is Mastermind-like protein 2 (MAML2) of Bos taurus (Bovine).